We begin with the raw amino-acid sequence, 142 residues long: Hemoglobin subunit alpha-1 (142 aa).

Positions 2 to 142 (KLSADDKHNV…VGYVLASKYR (141 aa)) constitute a Globin domain. Histidine 59 contributes to the O2 binding site. A heme b-binding site is contributed by histidine 88.

The protein belongs to the globin family. Major hemoglobin is a heterotetramer of two alpha-1 chains and two beta-1 chains. As to expression, red blood cells.

Functionally, involved in oxygen transport from the lung to the various peripheral tissues. This Triturus cristatus (Great crested newt) protein is Hemoglobin subunit alpha-1.